An 890-amino-acid chain; its full sequence is DNA mismatch repair protein MutS (890 aa).

645–652 lines the ATP pocket; the sequence is GPNMAGKS.

It belongs to the DNA mismatch repair MutS family.

In terms of biological role, this protein is involved in the repair of mismatches in DNA. It is possible that it carries out the mismatch recognition step. This protein has a weak ATPase activity. This Rickettsia conorii (strain ATCC VR-613 / Malish 7) protein is DNA mismatch repair protein MutS.